We begin with the raw amino-acid sequence, 256 residues long: MVALRLIPCLDVARGRVVKGVNFVGLRDAGDPVELACRYSRAGADELVFLDIAASHEGRGTLIDMVRRTAESVTIPFTVGGGISTVEGITELLRAGADKVSLNSSAVRRPELVREGADQFGCQCIVVAIDARRRDAGGWDVYVKGGRENTGLDVVEWAQRVAGLGAGEILLTSMDGDGTQAGYDLALTRAVADAVPIPVIASGGAGCLDHIAEALDVGPTGGHASAALLASLLHDGVLTVEEIKQDLLSRGLTIRP.

Catalysis depends on residues aspartate 11 and aspartate 130.

The protein belongs to the HisA/HisF family. Heterodimer of HisH and HisF.

It is found in the cytoplasm. It catalyses the reaction 5-[(5-phospho-1-deoxy-D-ribulos-1-ylimino)methylamino]-1-(5-phospho-beta-D-ribosyl)imidazole-4-carboxamide + L-glutamine = D-erythro-1-(imidazol-4-yl)glycerol 3-phosphate + 5-amino-1-(5-phospho-beta-D-ribosyl)imidazole-4-carboxamide + L-glutamate + H(+). It participates in amino-acid biosynthesis; L-histidine biosynthesis; L-histidine from 5-phospho-alpha-D-ribose 1-diphosphate: step 5/9. Its function is as follows. IGPS catalyzes the conversion of PRFAR and glutamine to IGP, AICAR and glutamate. The HisF subunit catalyzes the cyclization activity that produces IGP and AICAR from PRFAR using the ammonia provided by the HisH subunit. This chain is Imidazole glycerol phosphate synthase subunit HisF, found in Synechococcus sp. (strain CC9605).